Reading from the N-terminus, the 265-residue chain is Short chain dehydrogenase mdpC (265 aa).

Positions 25, 98, and 131 each coordinate NADP(+). Residues serine 147 and serine 148 each act as proton donor in the active site. Residues tyrosine 162, lysine 166, and threonine 197 each contribute to the NADP(+) site. Catalysis depends on tyrosine 162, which acts as the Proton acceptor. Residue lysine 166 is the Lowers pKa of active site Tyr of the active site.

It belongs to the short-chain dehydrogenases/reductases (SDR) family.

It catalyses the reaction 3,8,9,10-tetrahydroxy-6-methyl-1,4-dihydroanthracen-1-one + NADPH + H(+) = (3R)-3,8,9,10-tetrahydroxy-6-methyl-1,2,3,4-tetrahydroanthracen-1-one + NADP(+). It participates in secondary metabolite biosynthesis. Short chain dehydrogenase; part of the gene cluster that mediates the biosynthesis of monodictyphenone, a prenyl xanthone derivative. The pathway begins with the synthesis of atrochrysone thioester by the polyketide synthase (PKS) mdpG. The atrochrysone carboxyl ACP thioesterase mdpF then breaks the thioester bond and releases the atrochrysone carboxylic acid from mdpG. The atrochrysone carboxylic acid is then converted to atrochrysone which is further transformed into emodin anthrone. The next step is performed by the anthrone oxygenase mdpH that catalyzes the oxidation of emodinanthrone to emodin. Emodin is further modified to yield monodictyphenone via several steps involving mdpB, mdpC mdpJ, mdpK and mdpL. The short chain dehydrogenase mdpC converts the tautomers of emodin hydroquinone into the 3-hydroxy-3,4-dihydroan-thracen-1(2H)-one derivative. These enzymes with xptA, xptB and xptC are also proposed to be involved in the synthesis of shamixanthone from emodin. Especially, direct reduction of emodin by the short chain dehydrogenase mdpC followed by dehydration catalyzed by the scytalone dehydratase-like protein mdpB gives loss of oxygen and formation of chrysophanol intermediate in two simple steps. This Emericella nidulans (strain FGSC A4 / ATCC 38163 / CBS 112.46 / NRRL 194 / M139) (Aspergillus nidulans) protein is Short chain dehydrogenase mdpC.